The primary structure comprises 296 residues: Protoheme IX farnesyltransferase (296 aa).

The next 9 helical transmembrane spans lie at 27–47, 48–68, 98–118, 120–140, 148–168, 175–195, 219–239, 242–262, and 274–294; these read IMYLVVFTASTGMIMAPGTIH, PLIGLVSALCIAMGSGAAGAL, ALECGLALSLLSVFIMSLTVN, VSAILLACSIAFYAVVYTMVL, IVIGGIAGAFPPVIGWTSVTG, LLLFMIIFLWTPPHFWALSLL, HIMGYSLLLFIVALLPGLYVA, VLYEIIATSLGAVFLTHAYCL, and CMGLFSFSIYYLFLIFSAIAL.

The protein belongs to the UbiA prenyltransferase family. Protoheme IX farnesyltransferase subfamily.

The protein localises to the cell inner membrane. The catalysed reaction is heme b + (2E,6E)-farnesyl diphosphate + H2O = Fe(II)-heme o + diphosphate. The protein operates within porphyrin-containing compound metabolism; heme O biosynthesis; heme O from protoheme: step 1/1. In terms of biological role, converts heme B (protoheme IX) to heme O by substitution of the vinyl group on carbon 2 of heme B porphyrin ring with a hydroxyethyl farnesyl side group. This chain is Protoheme IX farnesyltransferase, found in Anaplasma phagocytophilum (strain HZ).